Here is a 198-residue protein sequence, read N- to C-terminus: Ribonuclease HII (198 aa).

Residues 9 to 198 (ITVAGADEAG…LLPDQLKIDF (190 aa)) enclose the RNase H type-2 domain. The a divalent metal cation site is built by D15, E16, and D107.

Belongs to the RNase HII family. It depends on Mn(2+) as a cofactor. The cofactor is Mg(2+).

It is found in the cytoplasm. It carries out the reaction Endonucleolytic cleavage to 5'-phosphomonoester.. Its function is as follows. Endonuclease that specifically degrades the RNA of RNA-DNA hybrids. The protein is Ribonuclease HII of Christiangramia forsetii (strain DSM 17595 / CGMCC 1.15422 / KT0803) (Gramella forsetii).